Reading from the N-terminus, the 150-residue chain is 1,4-dihydroxy-2-naphthoyl-CoA hydrolase (150 aa).

Asp-19 is a catalytic residue.

This sequence belongs to the 4-hydroxybenzoyl-CoA thioesterase family. DHNA-CoA hydrolase subfamily.

The enzyme catalyses 1,4-dihydroxy-2-naphthoyl-CoA + H2O = 1,4-dihydroxy-2-naphthoate + CoA + H(+). It functions in the pathway cofactor biosynthesis; phylloquinone biosynthesis. It participates in quinol/quinone metabolism; 1,4-dihydroxy-2-naphthoate biosynthesis; 1,4-dihydroxy-2-naphthoate from chorismate: step 7/7. Functionally, catalyzes the hydrolysis of 1,4-dihydroxy-2-naphthoyl-CoA (DHNA-CoA) to 1,4-dihydroxy-2-naphthoate (DHNA), a reaction involved in phylloquinone (vitamin K1) biosynthesis. This chain is 1,4-dihydroxy-2-naphthoyl-CoA hydrolase, found in Prochlorococcus marinus (strain MIT 9515).